Here is a 231-residue protein sequence, read N- to C-terminus: UPF0758 protein RBAM_025090 (231 aa).

Residues 109–231 (VIRSPEDGAK…FVSLKEKGYL (123 aa)) form the MPN domain. Zn(2+)-binding residues include His-180, His-182, and Asp-193. The short motif at 180–193 (HNHPSGDPTPSRED) is the JAMM motif element.

Belongs to the UPF0758 family.

This Bacillus velezensis (strain DSM 23117 / BGSC 10A6 / LMG 26770 / FZB42) (Bacillus amyloliquefaciens subsp. plantarum) protein is UPF0758 protein RBAM_025090.